The sequence spans 326 residues: Microtubule-associated protein RP/EB family member 2 (326 aa).

Ser9 is modified (phosphoserine). One can recognise a Calponin-homology (CH) domain in the interval 56–158 (TMSRHDIIAW…FIQWFKKFYD (103 aa)). Tyr166 carries the phosphotyrosine modification. Disordered regions lie at residues 170-239 (EARQ…DKDL) and 297-326 (YASDEQEGQTEEPEAEEQAHDQQPQQQEEY). Residues 186–326 (QIFNLPKKSH…DQQPQQQEEY (141 aa)) form a DCTN1-binding region. A compositionally biased stretch (low complexity) spans 199-233 (SPTAGAAKSSPASKPGSTPSRPSSAKRASSSGSAS). A phosphoserine mark is found at Ser218 and Ser235. An EB1 C-terminal domain is found at 235–305 (SDKDLETQVI…LYASDEQEGQ (71 aa)). The tract at residues 258-301 (EGVEKERDFYFGKLREIELLCQEHGQENDDLVQRLMEVLYASDE) is APC-binding. Over residues 300 to 312 (DEQEGQTEEPEAE) the composition is skewed to acidic residues. Positions 317-326 (DQQPQQQEEY) are enriched in low complexity.

It belongs to the MAPRE family. As to quaternary structure, interacts with DCTN1. Interacts with APC (via C-terminal). Interacts with monomeric and polymerized tubulin. Interacts with SLAIN1. Interacts (via the N-terminal region) with BAG1. Interacts with ASB14. In terms of processing, ubiquitinated in an ASB14-dependent manner; leading to proteasomal degradation. Post-translationally, phosphorylated at Ser-235 by CK2 leading to enhanced cell adhesion. Phosphorylated by CDK1 and AURKB during mitosis reduces the binding affinity of MAPRE2 for microtubules. As to expression, expressed during early stages of apico-basal epithelial differentiation but down-regulated in most cells at later stages.

Its subcellular location is the cytoplasm. The protein resides in the cytoskeleton. The protein localises to the spindle. In terms of biological role, adapter protein that is involved in microtubule polymerization, and spindle function by stabilizing microtubules and anchoring them at centrosomes. Therefore, ensures mitotic progression and genome stability. Acts as a central regulator of microtubule reorganization in apico-basal epithelial differentiation. Plays a role during oocyte meiosis by regulating microtubule dynamics. Participates in neurite growth by interacting with plexin B3/PLXNB3 and microtubule reorganization during apico-basal epithelial differentiation. Plays also an essential role for cell migration and focal adhesion dynamics. Mechanistically, recruits HAX1 to microtubules in order to regulate focal adhesion dynamics. The protein is Microtubule-associated protein RP/EB family member 2 (Mapre2) of Mus musculus (Mouse).